The primary structure comprises 367 residues: Lipoyl synthase 2, chloroplastic (367 aa).

Positions 84, 89, 95, 121, 125, 128, and 336 each coordinate [4Fe-4S] cluster. The Radical SAM core domain maps to 104-325 (GEGDGIATAT…KEYGESVGFR (222 aa)).

This sequence belongs to the radical SAM superfamily. Lipoyl synthase family. The cofactor is [4Fe-4S] cluster.

The protein resides in the plastid. It localises to the chloroplast. It carries out the reaction [[Fe-S] cluster scaffold protein carrying a second [4Fe-4S](2+) cluster] + N(6)-octanoyl-L-lysyl-[protein] + 2 oxidized [2Fe-2S]-[ferredoxin] + 2 S-adenosyl-L-methionine + 4 H(+) = [[Fe-S] cluster scaffold protein] + N(6)-[(R)-dihydrolipoyl]-L-lysyl-[protein] + 4 Fe(3+) + 2 hydrogen sulfide + 2 5'-deoxyadenosine + 2 L-methionine + 2 reduced [2Fe-2S]-[ferredoxin]. The protein operates within protein modification; protein lipoylation via endogenous pathway; protein N(6)-(lipoyl)lysine from octanoyl-[acyl-carrier-protein]: step 2/2. Functionally, catalyzes the radical-mediated insertion of two sulfur atoms into the C-6 and C-8 positions of the octanoyl moiety bound to the lipoyl domains of lipoate-dependent enzymes, thereby converting the octanoylated domains into lipoylated derivatives. In Zea mays (Maize), this protein is Lipoyl synthase 2, chloroplastic.